A 208-amino-acid chain; its full sequence is Na(+)-translocating NADH-quinone reductase subunit D (208 aa).

A run of 5 helical transmembrane segments spans residues 42–62, 72–92, 103–123, 131–151, and 178–198; these read IVMG…ISLV, IIVQ…LLQA, VFVG…AFAM, LIDG…VATV, and NGLF…IWGL.

The protein belongs to the NqrDE/RnfAE family. In terms of assembly, composed of six subunits; NqrA, NqrB, NqrC, NqrD, NqrE and NqrF.

The protein localises to the cell inner membrane. The catalysed reaction is a ubiquinone + n Na(+)(in) + NADH + H(+) = a ubiquinol + n Na(+)(out) + NAD(+). Functionally, NQR complex catalyzes the reduction of ubiquinone-1 to ubiquinol by two successive reactions, coupled with the transport of Na(+) ions from the cytoplasm to the periplasm. NqrA to NqrE are probably involved in the second step, the conversion of ubisemiquinone to ubiquinol. The chain is Na(+)-translocating NADH-quinone reductase subunit D from Neisseria meningitidis serogroup B (strain ATCC BAA-335 / MC58).